A 91-amino-acid polypeptide reads, in one-letter code: Large ribosomal subunit protein uL23 (91 aa).

The protein belongs to the universal ribosomal protein uL23 family. In terms of assembly, part of the 50S ribosomal subunit. Contacts protein L29, and trigger factor when it is bound to the ribosome.

Its function is as follows. One of the early assembly proteins it binds 23S rRNA. One of the proteins that surrounds the polypeptide exit tunnel on the outside of the ribosome. Forms the main docking site for trigger factor binding to the ribosome. The polypeptide is Large ribosomal subunit protein uL23 (Staphylococcus saprophyticus subsp. saprophyticus (strain ATCC 15305 / DSM 20229 / NCIMB 8711 / NCTC 7292 / S-41)).